Consider the following 111-residue polypeptide: Cell division topological specificity factor (111 aa).

This sequence belongs to the MinE family.

Prevents the cell division inhibition by proteins MinC and MinD at internal division sites while permitting inhibition at polar sites. This ensures cell division at the proper site by restricting the formation of a division septum at the midpoint of the long axis of the cell. The chain is Cell division topological specificity factor from Prochlorococcus marinus (strain MIT 9312).